Consider the following 700-residue polypeptide: Endoglucanase A (700 aa).

An N-terminal signal peptide occupies residues 1–33; sequence MKTRQRKRLFVSAALAVSLTMTVPMPASVNAAA. Glutamate 213 is an active-site residue. The CBM3 domain maps to 550–700; the sequence is NSDLVVQYKD…DGQLVWGIEP (151 aa).

Belongs to the glycosyl hydrolase 44 (cellulase J) family. In terms of processing, a short form (EG-A-S) arises from post-translational proteolysis of approximately 150 AA at the C-terminus of EG-A-L.

It catalyses the reaction Endohydrolysis of (1-&gt;4)-beta-D-glucosidic linkages in cellulose, lichenin and cereal beta-D-glucans.. The protein is Endoglucanase A (celA) of Paenibacillus lautus (Bacillus lautus).